Here is a 285-residue protein sequence, read N- to C-terminus: Probable endonuclease 4 (285 aa).

The Zn(2+) site is built by histidine 69, histidine 109, glutamate 145, aspartate 179, histidine 182, histidine 216, aspartate 229, histidine 231, and glutamate 261.

Belongs to the AP endonuclease 2 family. Zn(2+) is required as a cofactor.

The catalysed reaction is Endonucleolytic cleavage to 5'-phosphooligonucleotide end-products.. Its function is as follows. Endonuclease IV plays a role in DNA repair. It cleaves phosphodiester bonds at apurinic or apyrimidinic (AP) sites, generating a 3'-hydroxyl group and a 5'-terminal sugar phosphate. The protein is Probable endonuclease 4 of Salmonella paratyphi C (strain RKS4594).